The sequence spans 122 residues: Glycine cleavage system H protein (122 aa).

Positions 19-101 constitute a Lipoyl-binding domain; that stretch reads VATVGITDYA…QGKAWFFKIK (83 aa). Residue lysine 60 is modified to N6-lipoyllysine.

This sequence belongs to the GcvH family. In terms of assembly, the glycine cleavage system is composed of four proteins: P, T, L and H. (R)-lipoate serves as cofactor.

Functionally, the glycine cleavage system catalyzes the degradation of glycine. The H protein shuttles the methylamine group of glycine from the P protein to the T protein. The sequence is that of Glycine cleavage system H protein from Bradyrhizobium diazoefficiens (strain JCM 10833 / BCRC 13528 / IAM 13628 / NBRC 14792 / USDA 110).